The sequence spans 315 residues: Rhomboid-related protein 4 (315 aa).

Residues 1–21 are Cytoplasmic-facing; the sequence is MQRRSRGINTGLILLLSQIFH. A helical transmembrane segment spans residues 22–42; the sequence is VGINNIPPVTLATLALNIWFF. The Extracellular portion of the chain corresponds to 43-106; that stretch reads LNPQKPLYSS…RRLGSRWFAY (64 aa). The helical transmembrane segment at 107-127 threads the bilayer; the sequence is VITAFSVLTGVVYLLLQFAVA. The Cytoplasmic segment spans residues 128 to 138; it reads EFMDEPDFKRS. The helical transmembrane segment at 139-157 threads the bilayer; that stretch reads CAVGFSGVLFALKVLNNHY. S144 acts as the Nucleophile in catalysis. The Extracellular portion of the chain corresponds to 158–180; it reads CPGGFVNILGFPVPNRFACWVEL. A helical transmembrane segment spans residues 181–201; the sequence is VAIHLFSPGTSFAGHLAGILV. H195 is a catalytic residue. Residues 202–315 lie on the Cytoplasmic side of the membrane; it reads GLMYTQGPLK…RQRLHRFDSQ (114 aa). Positions 269 to 284 are ubiquitin-binding domain (UBD); it reads SEEEQLERALQASLWD. Positions 283 to 315 are disordered; it reads WDRGNTRNSPPPYGFHLSPEEMRRQRLHRFDSQ. Residues 300–315 are compositionally biased toward basic and acidic residues; sequence SPEEMRRQRLHRFDSQ. The tract at residues 301–315 is VCP/p97-interacting motif (VIM); it reads PEEMRRQRLHRFDSQ.

The protein belongs to the peptidase S54 family. Interacts (via C-terminal domain) with VCP. Interacts with ubiquitin and ubiquitinated proteins. Interacts with BIK and STEAP3. As to expression, expressed strongly in testis.

Its subcellular location is the endoplasmic reticulum membrane. It localises to the mitochondrion membrane. The catalysed reaction is Cleaves type-1 transmembrane domains using a catalytic dyad composed of serine and histidine that are contributed by different transmembrane domains.. With respect to regulation, inhibited by aprotinin. Its function is as follows. Intramembrane-cleaving serine protease that cleaves single transmembrane or multi-pass membrane proteins in the hydrophobic plane of the membrane, luminal loops and juxtamembrane regions. Involved in regulated intramembrane proteolysis and the subsequent release of functional polypeptides from their membrane anchors. Functional component of endoplasmic reticulum-associated degradation (ERAD) for misfolded membrane proteins. Required for the degradation process of some specific misfolded endoplasmic reticulum (ER) luminal proteins. Participates in the transfer of misfolded proteins from the ER to the cytosol, where they are destroyed by the proteasome in a ubiquitin-dependent manner. Functions in BIK, MPZ, PKD1, PTCRA, RHO, STEAP3 and TRAC processing. Involved in the regulation of exosomal secretion; inhibits the TSAP6-mediated secretion pathway. Involved in the regulation of apoptosis; modulates BIK-mediated apoptotic activity. Also plays a role in the regulation of spermatogenesis; inhibits apoptotic activity in spermatogonia. The chain is Rhomboid-related protein 4 (RHBDD1) from Homo sapiens (Human).